We begin with the raw amino-acid sequence, 254 residues long: Thiazole synthase (254 aa).

Lys-95 acts as the Schiff-base intermediate with DXP in catalysis. 1-deoxy-D-xylulose 5-phosphate-binding positions include Gly-156, 182–183 (AG), and 204–205 (NT).

It belongs to the ThiG family. As to quaternary structure, homotetramer. Forms heterodimers with either ThiH or ThiS.

It localises to the cytoplasm. The catalysed reaction is [ThiS sulfur-carrier protein]-C-terminal-Gly-aminoethanethioate + 2-iminoacetate + 1-deoxy-D-xylulose 5-phosphate = [ThiS sulfur-carrier protein]-C-terminal Gly-Gly + 2-[(2R,5Z)-2-carboxy-4-methylthiazol-5(2H)-ylidene]ethyl phosphate + 2 H2O + H(+). Its pathway is cofactor biosynthesis; thiamine diphosphate biosynthesis. Its function is as follows. Catalyzes the rearrangement of 1-deoxy-D-xylulose 5-phosphate (DXP) to produce the thiazole phosphate moiety of thiamine. Sulfur is provided by the thiocarboxylate moiety of the carrier protein ThiS. In vitro, sulfur can be provided by H(2)S. The polypeptide is Thiazole synthase (Shewanella putrefaciens (strain CN-32 / ATCC BAA-453)).